The following is a 241-amino-acid chain: Glutathione S-transferase omega-1 (241 aa).

S2 is subject to N-acetylserine. In terms of domain architecture, GST N-terminal spans 22-101 (GSIRIYSMRF…YLDEAYPGKK (80 aa)). The active-site Nucleophile is the C32. K57 carries the N6-acetyllysine modification. Residues K59, V72, and 85-86 (ES) contribute to the glutathione site. Positions 106–230 (DPYEKACQKM…DWQGFLELYL (125 aa)) constitute a GST C-terminal domain. S129 is modified (phosphoserine). Residues K143, K148, and K152 each carry the N6-acetyllysine modification.

The protein belongs to the GST superfamily. Omega family. Homodimer. As to expression, ubiquitous. Highest expression in liver, pancreas, skeletal muscle, spleen, thymus, colon, blood leukocyte and heart. Lowest expression in brain, placenta and lung.

It localises to the cytoplasm. The protein localises to the cytosol. It carries out the reaction RX + glutathione = an S-substituted glutathione + a halide anion + H(+). The enzyme catalyses L-dehydroascorbate + 2 glutathione = glutathione disulfide + L-ascorbate. It catalyses the reaction methylarsonate + 2 glutathione + H(+) = methylarsonous acid + glutathione disulfide + H2O. Its activity is regulated as follows. Monomethylarsonic acid reductase activity is competitively inhibited by 1-chloro 2,4-dinitrobenzene (CDNB) and by deoxycholate. Its function is as follows. Exhibits glutathione-dependent thiol transferase and dehydroascorbate reductase activities. Has S-(phenacyl)glutathione reductase activity. Also has glutathione S-transferase activity. Participates in the biotransformation of inorganic arsenic and reduces monomethylarsonic acid (MMA) and dimethylarsonic acid. The sequence is that of Glutathione S-transferase omega-1 (GSTO1) from Homo sapiens (Human).